A 442-amino-acid chain; its full sequence is MRLSRYFLPILKENPREAEIVSHRLMLRAGMIRQQGQGSFSWLPLGKRVLDKVCQIIREEQNRAGALEILMPTIQSADLWRESGRYNDYGKEMLRIKDRQDRDMLYGPTNEEMVTEIFRAYVKSYKDLPLNLYHIQWKFRDEVRPRFGVMRSREFLMKDAYSFDLDFEGARSAYNRMFVSYLRTFTRMGLQAIPMRADTGPIGGDLSHEFIILADTGESQVFCHRDYLSLAVPGANTDFANDGEIADIVKTWTTPYAATDEMHDEAAWEKVPESDKVSARGIEVGHIFHFGEKYSKPMGAKVTGPDGKDHFASGGSYGIGPSRLVAAIIEASHDENGIIWPDAVAPFDIGLINMKVGDADCDRVSEELNAAFTAAGKDVLYDDTDQRPGGKFATADLIGLPWQVIVGPRGVAAGEVEIKNRRTGERETLPIADAKKRFGVAA.

The protein belongs to the class-II aminoacyl-tRNA synthetase family. ProS type 2 subfamily. As to quaternary structure, homodimer.

The protein localises to the cytoplasm. It carries out the reaction tRNA(Pro) + L-proline + ATP = L-prolyl-tRNA(Pro) + AMP + diphosphate. Catalyzes the attachment of proline to tRNA(Pro) in a two-step reaction: proline is first activated by ATP to form Pro-AMP and then transferred to the acceptor end of tRNA(Pro). This chain is Proline--tRNA ligase, found in Mesorhizobium japonicum (strain LMG 29417 / CECT 9101 / MAFF 303099) (Mesorhizobium loti (strain MAFF 303099)).